Reading from the N-terminus, the 389-residue chain is Gastricsin (389 aa).

Positions 1–16 (MKWMVVVLLCLQLLEA) are cleaved as a signal peptide. The propeptide at 17–59 (KVVKVPLKKLKSLRETMKEKGLLEEFLKNHKYDPAQKYRYTDF) is activation peptide. Residues 73–386 (YFGEISIGTP…DMGNNRVGFA (314 aa)) enclose the Peptidase A1 domain. Aspartate 91 is a catalytic residue. Disulfide bonds link cysteine 104–cysteine 109 and cysteine 268–cysteine 272. Residue aspartate 277 is part of the active site. An intrachain disulfide couples cysteine 311 to cysteine 344.

This sequence belongs to the peptidase A1 family.

The protein resides in the secreted. It catalyses the reaction More restricted specificity than pepsin A, but shows preferential cleavage at Tyr-|-Xaa bonds. High activity on hemoglobin.. In terms of biological role, hydrolyzes a variety of proteins. This chain is Gastricsin (PGC), found in Rhinolophus ferrumequinum (Greater horseshoe bat).